The primary structure comprises 162 residues: uncharacterized protein (162 aa).

This sequence to R.meliloti R02472.

This is an uncharacterized protein from Escherichia coli (strain K12).